Here is a 61-residue protein sequence, read N- to C-terminus: Cobrotoxin-b (61 aa).

Disulfide bonds link C3–C23, C17–C40, C42–C53, and C54–C59.

It belongs to the three-finger toxin family. Short-chain subfamily. Type I alpha-neurotoxin sub-subfamily. In terms of tissue distribution, expressed by the venom gland.

Its subcellular location is the secreted. Its function is as follows. Produces peripheral paralysis by blocking neuromuscular transmission at the postsynaptic site. Binds to the nicotinic acetylcholine receptor. This is Cobrotoxin-b from Naja kaouthia (Monocled cobra).